The chain runs to 480 residues: MEQEDFYFPDTDLDLSFTSTTTDRTFASSSARTSLTLSFNDRLSTSSAVTTSSTSSSSVNHRRHDPHWSAIKSAKLLSSDGNIHLRHLKLIRHLGTGNLGRVFLCNLRDSSARFALKVIDRNCLTTEKKLSQVETEAEILSLLDHPFLPTLYARIDESHYTCLLIDYAPNGDLHSLLRKQPGNRLPIQPVRFFAAEVLVALEYLHAMGIVYRDLKPENVLLREDGHVMLSDFDLCFKSDVVPTFKSRRYRRSSSSPSLRRRRSGCFSVAAEKKYEREEIVSEFAAEPVTAFSRSCVGTHEYLAPELVSGNGHGSGVDWWAFGIFLYELLYGTTPFKGESKEQTLRNIVSTTKTASFHMDGDLDEARDLIEKLLVKDPRKRLGCARGAQDIKRHPFFDGIKWPLIRHYKPPEEVRGLVIKKSTRPHASHVIAVSPRRRKSFLWRALSYLLRGKSSSGGSKNQSNSNYYHYVGKSYASRKRV.

Residues 88-396 enclose the Protein kinase domain; sequence LKLIRHLGTG…AQDIKRHPFF (309 aa). ATP is bound by residues 94–102 and lysine 117; that span reads LGTGNLGRV. Aspartate 213 acts as the Proton acceptor in catalysis.

It belongs to the protein kinase superfamily. Ser/Thr protein kinase family. Expressed in root tips, lateral root primordia and emerging true leaf primordia.

The protein localises to the cytoplasm. The protein resides in the cytosol. The enzyme catalyses L-seryl-[protein] + ATP = O-phospho-L-seryl-[protein] + ADP + H(+). It catalyses the reaction L-threonyl-[protein] + ATP = O-phospho-L-threonyl-[protein] + ADP + H(+). Serine/threonine-protein kinase involved in the regulation of auxin signaling. Acts as a positive regulator of cellular auxin efflux and regulates organ development by enhancing PIN-mediated polar auxin transport. Phosphorylates conserved serine residues in the PIN auxin efflux carriers. Phosphorylation of PIN proteins is required and sufficient for apical-basal PIN polarity that enables directional intercellular auxin fluxes, which mediate differential growth, tissue patterning and organogenesis. Acts as a suppressor of root waving. This Arabidopsis thaliana (Mouse-ear cress) protein is Serine/threonine-protein kinase WAG2 (WAG2).